Reading from the N-terminus, the 359-residue chain is Peptide chain release factor 1 (359 aa).

At Q235 the chain carries N5-methylglutamine. Residues 283–294 (SKADEERSESRK) are compositionally biased toward basic and acidic residues. Residues 283–309 (SKADEERSESRKSQVGSGDRSERIRTY) are disordered.

This sequence belongs to the prokaryotic/mitochondrial release factor family. Methylated by PrmC. Methylation increases the termination efficiency of RF1.

It localises to the cytoplasm. In terms of biological role, peptide chain release factor 1 directs the termination of translation in response to the peptide chain termination codons UAG and UAA. In Mesorhizobium japonicum (strain LMG 29417 / CECT 9101 / MAFF 303099) (Mesorhizobium loti (strain MAFF 303099)), this protein is Peptide chain release factor 1.